Reading from the N-terminus, the 400-residue chain is Endoplasmin (400 aa).

Lys-1 is modified (N6-succinyllysine). Residue Asn-42 is glycosylated (N-linked (GlcNAc...) asparagine). Ser-44 is subject to Phosphoserine. Lys-76 carries the post-translational modification N6-acetyllysine. N-linked (GlcNAc...) asparagine glycans are attached at residues Asn-78 and Asn-99. Lys-230 is subject to N6-succinyllysine. Residues 346 to 400 are disordered; sequence IDPEAQVEEEPEEEPEDTTEDTEQDEEEEVDAGTEEEEEEEQETAKESTAEKDEL. Acidic residues predominate over residues 350-387; the sequence is AQVEEEPEEEPEDTTEDTEQDEEEEVDAGTEEEEEEEQ. Thr-379 carries the post-translational modification Phosphothreonine. Positions 388 to 400 are enriched in basic and acidic residues; sequence ETAKESTAEKDEL. A Prevents secretion from ER motif is present at residues 397–400; sequence KDEL.

The protein belongs to the heat shock protein 90 family. As to quaternary structure, homodimer; disulfide-linked. Component of an EIF2 complex at least composed of CELF1/CUGBP1, CALR, CALR3, EIF2S1, EIF2S2, HSP90B1 and HSPA5. Part of a large chaperone multiprotein complex comprising DNAJB11, HSP90B1, HSPA5, HYOU, PDIA2, PDIA4, PDIA6, PPIB, SDF2L1, UGGT1 and very small amounts of ERP29, but not, or at very low levels, CALR nor CANX. Interacts with AIMP1; regulates its retention in the endoplasmic reticulum. Hyperglycosylated form interacts with OS9; promoting its degradation by the endoplasmic reticulum associated degradation (ERAD). Interacts with CNPY3. This interaction is disrupted in the presence of ATP. Interacts with TLR4 and TLR9, but not with TLR3. Interacts with MZB1 in a calcium-dependent manner. Interacts with METTL23. Interacts with IL1B; the interaction facilitates cargo translocation into the ERGIC. Interacts with EIF2AK3. Post-translationally, phosphorylated by CK2. N-glycosylated cotranslationally at Asn-217 by STT3A-containing OST-A complex: this glycosylation is constitutive. In response to various stress, 5 additional facultative sites (Asn-62, Asn-107, Asn-445, Asn-481 and Asn-502) can be glycosylated post-translationally by STT3B-containing OST-B complex, leading to a hyperglycosylated form that is degraded by the ER-associated degradation (ERAD) pathway. In normal conditions, the OST-A complex together with CCDC134 prevent glycosylation at facultative sites during protein folding, thereby preventing hyperglycosylation. Mechanistically, nascent HSP90B1 is tethered during translation to a specialized CCDC134-containing translocon that forms a microenvironment for its folding, in which STT3A associates with the SRT pseudosubstrate motif, and prevents access to facultative glycosylation sites until folding is completed, rendering its facultative sites inaccessible to the OST-B complex.

It is found in the endoplasmic reticulum lumen. Its subcellular location is the sarcoplasmic reticulum lumen. It localises to the melanosome. The enzyme catalyses ATP + H2O = ADP + phosphate + H(+). Its function is as follows. ATP-dependent chaperone involved in the processing of proteins in the endoplasmic reticulum, regulating their transport. Together with MESD, acts as a modulator of the Wnt pathway by promoting the folding of LRP6, a coreceptor of the canonical Wnt pathway. When associated with CNPY3, required for proper folding of Toll-like receptors. Promotes folding and trafficking of TLR4 to the cell surface. May participate in the unfolding of cytosolic leaderless cargos (lacking the secretion signal sequence) such as the interleukin 1/IL-1 to facilitate their translocation into the ERGIC (endoplasmic reticulum-Golgi intermediate compartment) and secretion; the translocation process is mediated by the cargo receptor TMED10. The protein is Endoplasmin (HSP90B1) of Mesocricetus auratus (Golden hamster).